A 385-amino-acid chain; its full sequence is MKRSLLFSAVLCAASLTSVHAAQPITEPEFASDIVDRYADHIFYGSGATGMALVVIDGNQRVFRSYGETRPGNNVRPQLDSVVRIASLTKLMTSEMLVKLLDQGTVKLNDPLSKYAPPGARVPTYNGTPITLVNLATHTSALPREQPGGAAHRPVFVWPTREQRWKYLSTAKLKAAPGSQAAYSNLAFDLLADALANASGKPYTQLFEEQITRPLGMKDTTYTPSPDQCRRLMVAERGASPCNNTLAAIGSGGVYSTPGDMMRWMQQYLSSDFYQRSNQADRMQTLIYQRAQFTKVIGMDVPGKADALGLGWVYMAPKEGRPGIIQKTGGGGGFITYMAMIPQKNIGAFVVVTRSPLTRFKNMSDGINDLVTELSGNKPLVIPAS.

Positions 1 to 21 are cleaved as a signal peptide; that stretch reads MKRSLLFSAVLCAASLTSVHA.

The protein belongs to the beta-lactamase family.

It localises to the cell inner membrane. Its activity is regulated as follows. Inhibited by cefmetazole. Its function is as follows. Hydrolyzes the cross-linked dimers tetrapentapeptide (D45) and tetratetrapeptide (D44). Removes the terminal D-alanine from muropeptides and disaccharide pentapeptide M5 with a C-terminal D-Ala-D-Ala dipeptide. Associated with recycling and remodeling of peptidoglycan (PG). This chain is D-alanyl-D-alanine-carboxypeptidase/endopeptidase AmpH (ampH), found in Escherichia coli O157:H7.